Consider the following 214-residue polypeptide: Cysteine-rich venom protein LEI1 (214 aa).

The N-terminal stretch at 1-18 (MIAFILLSLAAVLQQSFG) is a signal peptide. The region spanning 37–165 (VNMHNSLRRS…YYSYFYVCQY (129 aa)) is the SCP domain. 5 cysteine pairs are disulfide-bonded: C74–C152, C91–C166, C147–C163, C185–C192, and C188–C197. The 14-residue stretch at 201-214 (CTVENKFTNCNTLV) folds into the ShKT domain.

This sequence belongs to the CRISP family. In terms of tissue distribution, expressed by the venom gland.

Its subcellular location is the secreted. Functionally, blocks contraction of smooth muscle elicited by high potassium-induced depolarization, but does not block caffeine-stimulated contraction. May target voltage-gated calcium channels on smooth muscle. The sequence is that of Cysteine-rich venom protein LEI1 from Leioheterodon madagascariensis (Malagasy giant hognose snake).